The following is a 69-amino-acid chain: Cold shock-like protein CspE (69 aa).

The CSD domain occupies 6-66; that stretch reads GNVKWFNESK…GAKGPSAANV (61 aa).

It localises to the cytoplasm. The chain is Cold shock-like protein CspE (cspE) from Escherichia coli O6:H1 (strain CFT073 / ATCC 700928 / UPEC).